A 244-amino-acid chain; its full sequence is tRNA pseudouridine synthase A (244 aa).

D53 functions as the Nucleophile in the catalytic mechanism. Y111 is a substrate binding site.

Belongs to the tRNA pseudouridine synthase TruA family. Homodimer.

The catalysed reaction is uridine(38/39/40) in tRNA = pseudouridine(38/39/40) in tRNA. Formation of pseudouridine at positions 38, 39 and 40 in the anticodon stem and loop of transfer RNAs. This Bacillus sp. (strain KSM-64) protein is tRNA pseudouridine synthase A.